The following is a 235-amino-acid chain: Peptidase E (235 aa).

Catalysis depends on charge relay system residues Ser-122, Asp-137, and His-159.

This sequence belongs to the peptidase S51 family.

The protein resides in the cytoplasm. It catalyses the reaction Dipeptidase E catalyzes the hydrolysis of dipeptides Asp-|-Xaa. It does not act on peptides with N-terminal Glu, Asn or Gln, nor does it cleave isoaspartyl peptides.. Hydrolyzes dipeptides containing N-terminal aspartate residues. May play a role in allowing the cell to use peptide aspartate to spare carbon otherwise required for the synthesis of the aspartate family of amino acids. This chain is Peptidase E, found in Shewanella amazonensis (strain ATCC BAA-1098 / SB2B).